Here is a 216-residue protein sequence, read N- to C-terminus: ATP-dependent Clp protease proteolytic subunit (216 aa).

Serine 101 serves as the catalytic Nucleophile. Histidine 126 is an active-site residue.

Belongs to the peptidase S14 family. As to quaternary structure, component of the chloroplastic Clp protease core complex.

Its subcellular location is the plastid. The protein localises to the chloroplast stroma. It catalyses the reaction Hydrolysis of proteins to small peptides in the presence of ATP and magnesium. alpha-casein is the usual test substrate. In the absence of ATP, only oligopeptides shorter than five residues are hydrolyzed (such as succinyl-Leu-Tyr-|-NHMec, and Leu-Tyr-Leu-|-Tyr-Trp, in which cleavage of the -Tyr-|-Leu- and -Tyr-|-Trp bonds also occurs).. In terms of biological role, cleaves peptides in various proteins in a process that requires ATP hydrolysis. Has a chymotrypsin-like activity. Plays a major role in the degradation of misfolded proteins. In Oryza nivara (Indian wild rice), this protein is ATP-dependent Clp protease proteolytic subunit.